Here is a 122-residue protein sequence, read N- to C-terminus: Small ribosomal subunit protein bS6 (122 aa).

Belongs to the bacterial ribosomal protein bS6 family.

Its function is as follows. Binds together with bS18 to 16S ribosomal RNA. The chain is Small ribosomal subunit protein bS6 from Trichlorobacter lovleyi (strain ATCC BAA-1151 / DSM 17278 / SZ) (Geobacter lovleyi).